We begin with the raw amino-acid sequence, 294 residues long: 4-diphosphocytidyl-2-C-methyl-D-erythritol kinase (294 aa).

K19 is an active-site residue. 106–116 (PVASGIGGGSA) serves as a coordination point for ATP. D148 is a catalytic residue.

This sequence belongs to the GHMP kinase family. IspE subfamily.

The catalysed reaction is 4-CDP-2-C-methyl-D-erythritol + ATP = 4-CDP-2-C-methyl-D-erythritol 2-phosphate + ADP + H(+). It functions in the pathway isoprenoid biosynthesis; isopentenyl diphosphate biosynthesis via DXP pathway; isopentenyl diphosphate from 1-deoxy-D-xylulose 5-phosphate: step 3/6. Its function is as follows. Catalyzes the phosphorylation of the position 2 hydroxy group of 4-diphosphocytidyl-2C-methyl-D-erythritol. The chain is 4-diphosphocytidyl-2-C-methyl-D-erythritol kinase from Rhizobium etli (strain ATCC 51251 / DSM 11541 / JCM 21823 / NBRC 15573 / CFN 42).